The primary structure comprises 525 residues: Serine/threonine-protein kinase YPK3 (525 aa).

2 positions are modified to phosphoserine: Ser90 and Ser105. Thr107 bears the Phosphothreonine mark. A Protein kinase domain is found at 128-424 (FKPVRVLGQG…KTGANNKPTK (297 aa)). Residues 134-142 (LGQGAYGKV) and Lys157 each bind ATP. The disordered stretch occupies residues 170-193 (ATDSKREDEDKNDGNNNDNDDGLS). A compositionally biased stretch (basic and acidic residues) spans 172 to 182 (DSKREDEDKND). Residue Asp277 is the Proton acceptor of the active site. The residue at position 321 (Ser321) is a Phosphoserine; by PKH1 or PKH2. The region spanning 445-524 (RKIDWKLLES…KASGSYLEKY (80 aa)) is the AGC-kinase C-terminal domain. Thr490 is subject to Phosphothreonine; by TORC1. Residue Ser513 is modified to Phosphoserine; by TORC1.

Belongs to the protein kinase superfamily. AGC Ser/Thr protein kinase family. S6 kinase subfamily. Post-translationally, phosphorylated by PKA in a TORC1-dependent manner. Phosphorylation at PKA consensus sites RRxS/T decreases upon rapamycin treatment.

The protein resides in the cytoplasm. The catalysed reaction is L-seryl-[protein] + ATP = O-phospho-L-seryl-[protein] + ADP + H(+). It carries out the reaction L-threonyl-[protein] + ATP = O-phospho-L-threonyl-[protein] + ADP + H(+). Its function is as follows. AGC kinase which plays a role in TOR complex 1 (TORC1) signaling pathway which mediates temporal control of cell growth in response to nutrients. Required for phosphorylation of ribosomal protein S6 (RPS6A/RPS6B) at 'Ser-232' and 'Ser-233'. The chain is Serine/threonine-protein kinase YPK3 from Saccharomyces cerevisiae (strain ATCC 204508 / S288c) (Baker's yeast).